A 68-amino-acid polypeptide reads, in one-letter code: UPF0253 protein VFMJ11_0680 (68 aa).

Belongs to the UPF0253 family.

The protein is UPF0253 protein VFMJ11_0680 of Aliivibrio fischeri (strain MJ11) (Vibrio fischeri).